We begin with the raw amino-acid sequence, 784 residues long: Probable phosphoketolase (784 aa).

Belongs to the XFP family. The cofactor is thiamine diphosphate.

This Rhodopseudomonas palustris (strain HaA2) protein is Probable phosphoketolase.